The chain runs to 317 residues: Pyridoxal 5'-phosphate synthase subunit PdxS (317 aa).

D47 contacts D-ribose 5-phosphate. K104 acts as the Schiff-base intermediate with D-ribose 5-phosphate in catalysis. A D-ribose 5-phosphate-binding site is contributed by G176. R188 lines the D-glyceraldehyde 3-phosphate pocket. Residues G237 and 258–259 each bind D-ribose 5-phosphate; that span reads GS.

This sequence belongs to the PdxS/SNZ family. As to quaternary structure, in the presence of PdxT, forms a dodecamer of heterodimers.

It carries out the reaction aldehydo-D-ribose 5-phosphate + D-glyceraldehyde 3-phosphate + L-glutamine = pyridoxal 5'-phosphate + L-glutamate + phosphate + 3 H2O + H(+). It functions in the pathway cofactor biosynthesis; pyridoxal 5'-phosphate biosynthesis. In terms of biological role, catalyzes the formation of pyridoxal 5'-phosphate from ribose 5-phosphate (RBP), glyceraldehyde 3-phosphate (G3P) and ammonia. The ammonia is provided by the PdxT subunit. Can also use ribulose 5-phosphate and dihydroxyacetone phosphate as substrates, resulting from enzyme-catalyzed isomerization of RBP and G3P, respectively. In Corynebacterium glutamicum (strain ATCC 13032 / DSM 20300 / JCM 1318 / BCRC 11384 / CCUG 27702 / LMG 3730 / NBRC 12168 / NCIMB 10025 / NRRL B-2784 / 534), this protein is Pyridoxal 5'-phosphate synthase subunit PdxS.